Reading from the N-terminus, the 148-residue chain is Large ribosomal subunit protein uL15 (148 aa).

Residues 1–57 (MRLNDVKPQKGSKKRRRRVGRGISAGQGASAGLGMRGQKSRSGSGTRPGFEGGQQPL) are disordered. Residues 10-20 (KGSKKRRRRVG) show a composition bias toward basic residues. The span at 23 to 35 (ISAGQGASAGLGM) shows a compositional bias: gly residues.

It belongs to the universal ribosomal protein uL15 family. Part of the 50S ribosomal subunit.

Binds to the 23S rRNA. This chain is Large ribosomal subunit protein uL15, found in Nostoc sp. (strain PCC 7120 / SAG 25.82 / UTEX 2576).